The following is an 84-amino-acid chain: ATP synthase subunit c (84 aa).

Transmembrane regions (helical) follow at residues 9-29 (IIGA…GFAI) and 54-74 (IVAG…LLFI).

It belongs to the ATPase C chain family. F-type ATPases have 2 components, F(1) - the catalytic core - and F(0) - the membrane proton channel. F(1) has five subunits: alpha(3), beta(3), gamma(1), delta(1), epsilon(1). F(0) has three main subunits: a(1), b(2) and c(10-14). The alpha and beta chains form an alternating ring which encloses part of the gamma chain. F(1) is attached to F(0) by a central stalk formed by the gamma and epsilon chains, while a peripheral stalk is formed by the delta and b chains.

The protein resides in the cell inner membrane. Functionally, f(1)F(0) ATP synthase produces ATP from ADP in the presence of a proton or sodium gradient. F-type ATPases consist of two structural domains, F(1) containing the extramembraneous catalytic core and F(0) containing the membrane proton channel, linked together by a central stalk and a peripheral stalk. During catalysis, ATP synthesis in the catalytic domain of F(1) is coupled via a rotary mechanism of the central stalk subunits to proton translocation. Its function is as follows. Key component of the F(0) channel; it plays a direct role in translocation across the membrane. A homomeric c-ring of between 10-14 subunits forms the central stalk rotor element with the F(1) delta and epsilon subunits. The chain is ATP synthase subunit c from Haemophilus influenzae (strain PittEE).